An 854-amino-acid chain; its full sequence is Gamma-secretase-activating protein (854 aa).

Belongs to the GSAP family. As to quaternary structure, interacts with APP; specifically interacts with the CTF-alpha product of APP. Interacts with the gamma-secretase complex. Post-translationally, the protein is first synthesized as a holoprotein form of 98 kDa and rapidly processed into the gamma-secretase-activating protein 16 kDa C-terminal form, which constitutes the predominant form. In terms of tissue distribution, widely expressed.

Its subcellular location is the golgi apparatus. It localises to the trans-Golgi network. Functionally, regulator of gamma-secretase activity, which specifically activates the production of amyloid-beta protein (amyloid-beta protein 40 and amyloid-beta protein 42), without affecting the cleavage of other gamma-secretase targets such has Notch. The gamma-secretase complex is an endoprotease complex that catalyzes the intramembrane cleavage of integral membrane proteins such as Notch receptors and APP (amyloid-beta precursor protein). Specifically promotes the gamma-cleavage of APP CTF-alpha (also named APP-CTF) by the gamma-secretase complex to generate amyloid-beta, while it reduces the epsilon-cleavage of APP CTF-alpha, leading to a low production of AICD. This is Gamma-secretase-activating protein (GSAP) from Homo sapiens (Human).